The primary structure comprises 399 residues: Endonuclease III homolog 1 (399 aa).

The transit peptide at 1–26 directs the protein to the mitochondrion; it reads MQKISKYSSMAILRKRPLVKTETGPE. Residues 14 to 37 carry the Bipartite nuclear localization signal motif; the sequence is RKRPLVKTETGPESELLPEKRTKI. K194 participates in a covalent cross-link: Glycyl lysine isopeptide (Lys-Gly) (interchain with G-Cter in SUMO). Residues 223-247 form the HhH domain; that stretch reads FSSDVPATINELLGLPGVGPKMAYL. The active-site Nucleophile; for N-glycosylase activity is the K243.

The protein belongs to the Nth/MutY family. Monosumoylated. Sumoylation is associated with targeting of NTG1 to nuclei containing oxidative DNA damage.

The protein resides in the nucleus. It localises to the mitochondrion. It carries out the reaction 2'-deoxyribonucleotide-(2'-deoxyribose 5'-phosphate)-2'-deoxyribonucleotide-DNA = a 3'-end 2'-deoxyribonucleotide-(2,3-dehydro-2,3-deoxyribose 5'-phosphate)-DNA + a 5'-end 5'-phospho-2'-deoxyribonucleoside-DNA + H(+). Bifunctional DNA N-glycosylase with associated apurinic/apyrimidinic (AP) lyase function that catalyzes the first step in base excision repair (BER), the primary repair pathway for the repair of oxidative DNA damage. The DNA N-glycosylase activity releases the damaged DNA base from DNA by cleaving the N-glycosidic bond, leaving an AP site. The AP-lyase activity cleaves the phosphodiester bond 3' to the AP site by a beta-elimination. Primarily recognizes and repairs oxidative base damage of pyrimidines, but also purine-derived lesions, alkylation damage and cytosine photoproducts generated by UV irradiation as well as abasic sites. Also has 8-oxoguanine DNA glycosylase activity. The AP lyase can incise AP sites opposite all four bases. May also play a role in the regulation of mtDNA copy number by introducing a double-stranded break (DSB) at the mtDNA replication origin ori5, initiating the rolling-circle mtDNA replication. The polypeptide is Endonuclease III homolog 1 (Saccharomyces cerevisiae (strain ATCC 204508 / S288c) (Baker's yeast)).